A 611-amino-acid chain; its full sequence is Solute carrier family 23 member 3 (611 aa).

Residues 1 to 52 are Cytoplasmic-facing; that stretch reads MSRSPLHPIPLLSEGYQDTPAPLPPLLPPLQNPSSRSWASRVFGPSTWGLSC. A helical transmembrane segment spans residues 53-73; the sequence is LLALQHFLVLASLLWASHLLL. At 74–88 the chain is on the extracellular side; it reads LHGLPPGGLSYPPAQ. The chain crosses the membrane as a helical span at residues 89–109; sequence LLASSFFSCGLSTVLQTWMGS. At 110-168 the chain is on the cytoplasmic side; that stretch reads RLPLIQAPSLEFLIPALVLTNQKLPLTTKTPGNASLSLPLCSLTRSCHGLELWNTSLRE. Residues 169–189 traverse the membrane as a helical segment; it reads VSGAVVVSGLLQGTIGLLGVP. At 190–191 the chain is on the extracellular side; sequence GR. A helical membrane pass occupies residues 192–212; it reads VFPYCGPLVLAPSLVVAGLSA. The Cytoplasmic portion of the chain corresponds to 213 to 215; it reads HKE. A helical transmembrane segment spans residues 216–236; the sequence is VAQFCSAHWGLALLLILLMVV. Over 237-269 the chain is Extracellular; that stretch reads CSQHLGSCQIPLCSWRPSSTSTHICIPVFRLLS. A helical transmembrane segment spans residues 270–290; it reads VLAPVACVWFISAFVGTSVIP. Residues 291–319 lie on the Cytoplasmic side of the membrane; the sequence is LQLSEPSDAPWFWLPHPGEWEWPLLTPRA. A helical transmembrane segment spans residues 320 to 340; the sequence is LAAGISMALAASTSSLGCYAL. The Extracellular portion of the chain corresponds to 341–358; that stretch reads CGQLLRLSPPPPHACSRG. Residues 359–379 traverse the membrane as a helical segment; the sequence is LSLEGLGSVLAGLLGSPLGTA. At 380–397 the chain is on the cytoplasmic side; it reads SSFPNVGTVSLFQTGSRR. Residues 398–417 form a helical membrane-spanning segment; that stretch reads VAHLVGLFCMGLGLSPRLAQ. Residues 418–426 are Extracellular-facing; the sequence is LFTSIPLPV. A helical transmembrane segment spans residues 427-449; the sequence is LGGVLGVTQAVVLSAGFSSFHLA. Residues 450–455 are Cytoplasmic-facing; that stretch reads DIDSGR. The helical transmembrane segment at 456-475 threads the bilayer; that stretch reads NVFIVGFSIFMALLLPRWLR. Residues 476-489 are Extracellular-facing; sequence EAPVLLNTGWSPLD. Residues 490–510 traverse the membrane as a helical segment; the sequence is MFLRSLLAEPIFLAGLLGFLL. At 511 to 611 the chain is on the cytoplasmic side; that stretch reads ENTISGTRAE…TASREGVRSQ (101 aa). Residues 574-611 are disordered; the sequence is PEDSGDEGGSSKTGERADLLPNSGESYSTASREGVRSQ. A compositionally biased stretch (polar residues) spans 596-605; the sequence is SGESYSTASR.

This sequence belongs to the nucleobase:cation symporter-2 (NCS2) (TC 2.A.40) family.

The protein localises to the membrane. The protein resides in the cytoplasm. The enzyme catalyses hypoxanthine(out) + Na(+)(out) = hypoxanthine(in) + Na(+)(in). Its function is as follows. Acts as a sodium-dependent hypoxanthine transporter. May show xanthine-hypoxanthine exchange activity. This Mus musculus (Mouse) protein is Solute carrier family 23 member 3 (Slc23a3).